The primary structure comprises 369 residues: Guanine nucleotide-binding protein subunit beta-2 (369 aa).

Polar residues predominate over residues 1-24 (MSTIAGESSSSSKMPENSQPTTTE). The disordered stretch occupies residues 1–28 (MSTIAGESSSSSKMPENSQPTTTEKGSE). 7 WD repeats span residues 79–109 (GHVG…IVWD), 121–151 (MPTT…SVVP), 167–197 (THTS…AIWD), 209–241 (GHTG…LVWD), 253–283 (GHEA…RLFD), 297–327 (SILF…GVWD), and 339–369 (GHEN…RIWA).

The protein belongs to the WD repeat G protein beta family. As to quaternary structure, g proteins are composed of 3 units, alpha, beta and gamma. Interacts with G protein gamma subunits gpc-1 and gpc-2 and with egl-10 and eat-16.

Guanine nucleotide-binding proteins (G proteins) are involved as a modulator or transducer in various transmembrane signaling systems. The beta and gamma chains are required for the GTPase activity, for replacement of GDP by GTP, and for G protein-effector interaction. Plays a role in regulating dopamine-mediated locomotion behavior. The protein is Guanine nucleotide-binding protein subunit beta-2 of Caenorhabditis elegans.